Consider the following 213-residue polypeptide: Ras-related protein Rab-25 (213 aa).

9 residues coordinate GTP: Ser21, Gly24, Lys25, Thr26, Asn27, Ser38, His39, Thr43, and Thr44. A Mg(2+)-binding site is contributed by Thr26. 2 consecutive short sequence motifs (switch) follow at residues Asn35–Phe49 and Asp67–Gly84. Residues Thr44 and Asp67 each contribute to the Mg(2+) site. Residues Gly70, Asn125, Lys126, Asp128, Ala156, and Leu157 each contribute to the GTP site. S-geranylgeranyl cysteine attachment occurs at residues Cys209 and Cys210. Cys210 carries the cysteine methyl ester modification. The propeptide at Ile211–Leu213 is removed in mature form.

The protein belongs to the small GTPase superfamily. Rab family. In terms of assembly, interacts (GTP-bound form) with RAB11FIP1, RAB11FIP2, RAB11FIP3 and RAB11FIP4. Interacts (via the hypervariable C-terminal region) with ITGB1 (via the cytoplasmic region); the interaction is GTP-dependent. Interacts with ITGAV. Associates with the integrin alpha-V/beta-1 heterodimer. Interacts with VPS33B. It depends on Mg(2+) as a cofactor.

It localises to the cell membrane. The protein resides in the cell projection. The protein localises to the pseudopodium membrane. It is found in the cytoplasmic vesicle. It catalyses the reaction GTP + H2O = GDP + phosphate + H(+). With respect to regulation, regulated by guanine nucleotide exchange factors (GEFs) which promote the exchange of bound GDP for free GTP. Regulated by GTPase activating proteins (GAPs) which increase the GTP hydrolysis activity. Inhibited by GDP dissociation inhibitors (GDIs) which prevent Rab-GDP dissociation. Its function is as follows. The small GTPases Rab are key regulators of intracellular membrane trafficking, from the formation of transport vesicles to their fusion with membranes. Rabs cycle between an inactive GDP-bound form and an active GTP-bound form that is able to recruit to membranes different set of downstream effectors directly responsible for vesicle formation, movement, tethering and fusion. RAB25 regulates epithelial cell differentiation, proliferation and survival, thereby playing key roles in tumorigenesis. Promotes invasive migration of cells in which it functions to localize and maintain integrin alpha-V/beta-1 at the tips of extending pseudopodia. Involved in the regulation of epithelial morphogenesis through the control of CLDN4 expression and localization at tight junctions. May selectively regulate the apical recycling pathway. Together with MYO5B regulates transcytosis. This Canis lupus familiaris (Dog) protein is Ras-related protein Rab-25 (RAB25).